Consider the following 263-residue polypeptide: Izumo sperm-egg fusion protein 3 (263 aa).

The first 22 residues, 1-22 (MGDLWVLLFSSLSLAAFHGVRG), serve as a signal peptide directing secretion. Over 23-176 (CLECDPKFTE…EDPKTAENRE (154 aa)) the chain is Extracellular. Residues Asn98 and Asn128 are each glycosylated (N-linked (GlcNAc...) asparagine). Residues 177–197 (ISLYLIFIAEAVILASAVLLF) form a helical membrane-spanning segment. Residues 198 to 263 (HVCISHRRKM…CAESEMQTGT (66 aa)) are Cytoplasmic-facing. Positions 241–263 (GRSNSNSLTGEPTCAESEMQTGT) are disordered.

The protein belongs to the Izumo family. Monomer and homodimer. Sperm-specific (at protein level).

Its subcellular location is the cell membrane. It is found in the cytoplasmic vesicle. It localises to the secretory vesicle. The protein localises to the acrosome inner membrane. Its function is as follows. Plays an important role in the biogenesis of the acrosome during sperm development. The chain is Izumo sperm-egg fusion protein 3 (Izumo3) from Mus musculus (Mouse).